Here is a 254-residue protein sequence, read N- to C-terminus: 5-oxoprolinase subunit A (254 aa).

This sequence belongs to the LamB/PxpA family. In terms of assembly, forms a complex composed of PxpA, PxpB and PxpC.

It carries out the reaction 5-oxo-L-proline + ATP + 2 H2O = L-glutamate + ADP + phosphate + H(+). Catalyzes the cleavage of 5-oxoproline to form L-glutamate coupled to the hydrolysis of ATP to ADP and inorganic phosphate. The sequence is that of 5-oxoprolinase subunit A from Acinetobacter baumannii (strain ATCC 17978 / DSM 105126 / CIP 53.77 / LMG 1025 / NCDC KC755 / 5377).